The chain runs to 132 residues: Small ribosomal subunit protein uS8c (132 aa).

It belongs to the universal ribosomal protein uS8 family. As to quaternary structure, part of the 30S ribosomal subunit.

It localises to the plastid. It is found in the chloroplast. Functionally, one of the primary rRNA binding proteins, it binds directly to 16S rRNA central domain where it helps coordinate assembly of the platform of the 30S subunit. The sequence is that of Small ribosomal subunit protein uS8c (rps8) from Pinus thunbergii (Japanese black pine).